The following is a 344-amino-acid chain: GLIPR1-like protein 2 (344 aa).

An SCP domain is found at 58–192 (VNLHNELRGD…IHAAIFICNY (135 aa)). A helical transmembrane segment spans residues 254–274 (TFILLLRILCFILCVITVLIV). 2 stretches are compositionally biased toward acidic residues: residues 292-304 (EESE…EEKE) and 312-334 (EMEM…EEET). Positions 292-344 (EESEAGNEEEEKEEEKKEKEEMEMEIMEMEEEKEEREEEEEETQKEKMEEEEK) are disordered. Positions 335–344 (QKEKMEEEEK) are enriched in basic and acidic residues.

It belongs to the CRISP family. In terms of tissue distribution, highly expressed in testis. Detected in prostate, kidney, bladder, lung and bone marrow.

The protein localises to the membrane. In Homo sapiens (Human), this protein is GLIPR1-like protein 2 (GLIPR1L2).